The primary structure comprises 551 residues: uncharacterized protein (551 aa).

Over residues 1 to 11 (MRRVSLPNQLN) the composition is skewed to polar residues. Disordered stretches follow at residues 1–22 (MRRV…TRGE) and 523–551 (CDPT…QAFH). Residues 12-22 (ETRRRSPTRGE) show a composition bias toward basic and acidic residues. The span at 537 to 551 (QQPQQQQQQQQQAFH) shows a compositional bias: low complexity.

To Synechocystis PCC 6803 sll0335 and to M.tuberculosis Rv2567.

This is an uncharacterized protein from Mycobacterium bovis (strain ATCC BAA-935 / AF2122/97).